The sequence spans 1000 residues: ATP-dependent DNA/RNA helicase DHX36 (1000 aa).

The segment at 1-43 (MSYDYHQSWSRDGGPRGSGQGSGGGGGGSRGSGGGGGGRGGRG) is required for recruitment to cytoplasmic stress granules. Residues 1 to 53 (MSYDYHQSWSRDGGPRGSGQGSGGGGGGSRGSGGGGGGRGGRGRHPAHLKGRE) form a disordered region. Positions 1-96 (MSYDYHQSWS…IVQLLNSVQA (96 aa)) are required for the pre-miR-134 transport. The interval 1-192 (MSYDYHQSWS…KKTDPRYIEM (192 aa)) is necessary for nuclear and nucleolar caps localizations. Gly residues predominate over residues 15–40 (PRGSGQGSGGGGGGSRGSGGGGGGRG). Positions 45-67 (HPAHLKGREIGLWYAKKQTQKNK) are DSM (DHX36-specific motif). A required for G4-DNA- and G4-RNA-binding region spans residues 45 to 97 (HPAHLKGREIGLWYAKKQTQKNKEAERQERAVVHMDERREEQIVQLLNSVQAK). RecA-like domain stretches follow at residues 98–378 (NDKD…MIHI) and 379–620 (PGFT…DYQL). Phosphoserine is present on S153. The Helicase ATP-binding domain occupies 209–379 (VNLINNHQVT…FGNCPMIHIP (171 aa)). 225–230 (GCGKTT) contacts ATP. The segment at 257–309 (RRISAISVAERVAAERAESCGNGNSTGYQIRLQSRLPRKQGSILYCTTGIILQ) is necessary for interaction with single-stranded DNA at the 3'-end of the G4-DNA structure. Residues 326-329 (DEIH) carry the DEAH box motif. Mg(2+) contacts are provided by E327 and H329. The region spanning 469–639 (ALIRYIVLEE…ELCLQIKILR (171 aa)) is the Helicase C-terminal domain. Positions 490–549 (WDNISTLHDLLMSQVMFKSDRFLIIPLHSLMPTVNQTQVFKKTPPGVRKIVIATNIAETS) are necessary for interaction with single-stranded DNA at the 3'-end of the G4-DNA structure. A Nuclear localization signal motif is present at residues 509–520 (DRFLIIPLHSLM). Residues S549 and 594 to 597 (RAGR) each bind ATP. The interval 621–690 (PEILRTPLEE…LGVHLARLPV (70 aa)) is WH domain. 3 necessary for interaction with single-stranded DNA at the 3'-end of the G4-DNA structure regions span residues 630-689 (ELCL…ARLP), 841-852 (NLGKKRKMVKVH), and 862-892 (HPKSVNVEQTDFHYNWLIYHLKMRTSSIYLY). An OB-fold-like subdomains region spans residues 833 to 897 (PKVAKIRLNL…SIYLYDCTEV (65 aa)). K939 carries the post-translational modification N6-acetyllysine.

Found in a multi-helicase-TICAM1 complex at least composed of DHX36, DDX1, DDX21 and TICAM1; this complex exists in resting cells with or without dsRNA poly(I:C) ligand stimulation. Interacts (via C-terminus) with TICAM1 (via TIR domain). Interacts (via C-terminus) with DDX21; this interaction serves as bridges to TICAM1. Interacts with TERT; this interaction is dependent on the ability of DHX36 to bind to the G-quadruplex RNA (G4-RNA) structure present in the telomerase RNA template component (TERC). Interacts with DKC1; this interaction is dependent on the ability of DHX36 to bind to the G4-RNA structure present in TERC. Interacts with PARN; this interaction stimulates PARN to enhance uPA mRNA decay. Interacts with EXOSC3; this interaction occurs in a RNase-insensitive manner. Interacts with EXOSC10; this interaction occurs in a RNase-insensitive manner. Interacts with ILF3; this interaction occurs in a RNA-dependent manner. Interacts with ELAVL1; this interaction occurs in an RNA-dependent manner. Interacts with DDX5; this interaction occurs in a RNA-dependent manner. Interacts with DDX17; this interaction occurs in a RNA-dependent manner. Interacts with HDAC1; this interaction occurs in a RNA-dependent manner. Interacts with HDAC3; this interaction occurs in a RNA-dependent manner. Interacts with HDAC4. Interacts with AGO1. Interacts with AGO2. Interacts with ERCC6. Requires Mg(2+) as cofactor.

It is found in the nucleus. The protein localises to the cytoplasm. It localises to the cytosol. The protein resides in the stress granule. Its subcellular location is the nucleus speckle. It is found in the chromosome. The protein localises to the telomere. It localises to the mitochondrion. The protein resides in the perikaryon. Its subcellular location is the cell projection. It is found in the dendrite. The protein localises to the axon. It catalyses the reaction ATP + H2O = ADP + phosphate + H(+). With respect to regulation, ATPase activity is enhanced in the presence of homomeric poly(U) RNAs, but not by double-stranded DNA (dsDNA), double-stranded RNA (dsRNA) and tRNA. In terms of biological role, multifunctional ATP-dependent helicase that unwinds G-quadruplex (G4) structures. Plays a role in many biological processes such as genomic integrity, gene expression regulations and as a sensor to initiate antiviral responses. G4 structures correspond to helical structures containing guanine tetrads. Binds with high affinity to and unwinds G4 structures that are formed in nucleic acids (G4-DNA and G4-RNA). Plays a role in genomic integrity. Converts the G4-RNA structure present in telomerase RNA template component (TREC) into a double-stranded RNA to promote P1 helix formation that acts as a template boundary ensuring accurate reverse transcription. Plays a role in transcriptional regulation. Resolves G4-DNA structures in promoters of genes, such as YY1, KIT/c-kit and ALPL and positively regulates their expression. Plays a role in post-transcriptional regulation. Unwinds a G4-RNA structure located in the 3'-UTR polyadenylation site of the pre-mRNA TP53 and stimulates TP53 pre-mRNA 3'-end processing in response to ultraviolet (UV)-induced DNA damage. Binds to the precursor-microRNA-134 (pre-miR-134) terminal loop and regulates its transport into the synapto-dendritic compartment. Involved in the pre-miR-134-dependent inhibition of target gene expression and the control of dendritic spine size. Plays a role in the regulation of cytoplasmic mRNA translation and mRNA stability. Binds to both G4-RNA structures and alternative non-quadruplex-forming sequence within the 3'-UTR of the PITX1 mRNA regulating negatively PITX1 protein expression. Binds to both G4-RNA structure in the 5'-UTR and AU-rich elements (AREs) localized in the 3'-UTR of NKX2-5 mRNA to either stimulate protein translation or induce mRNA decay in an ELAVL1-dependent manner, respectively. Also binds to ARE sequences present in several mRNAs mediating exosome-mediated 3'-5' mRNA degradation. Involved in cytoplasmic urokinase-type plasminogen activator (uPA) mRNA decay. Component of a multi-helicase-TICAM1 complex that acts as a cytoplasmic sensor of viral double-stranded RNA (dsRNA) and plays a role in the activation of a cascade of antiviral responses including the induction of pro-inflammatory cytokines via the adapter molecule TICAM1. Required for the early embryonic development and hematopoiesis. Involved in the regulation of cardioblast differentiation and proliferation during heart development. Involved in spermatogonia differentiation. May play a role in ossification. In Rattus norvegicus (Rat), this protein is ATP-dependent DNA/RNA helicase DHX36.